The following is a 232-amino-acid chain: MSNVDRAEIAKFEALAHRWWDRESEFKPLHDINPLRVNWIDERVGLAGKKVLDVGCGGGILSEAMALRGATVTGIDMGEAPLAVAQLHQLESGVSVEYRQITAEDMAEEMPEQYDVVTCLEMLEHVPDPSSVIRACYRMVKPGGQVFFSTINRNPKAYLFAVVGAEYILNLLPRGTHDFKKFIRPSELGAWSRDAGLQVKDVIGLTYNPLTKHYKLTSDVGVNYMIQTLREA.

S-adenosyl-L-methionine-binding residues include Arg-36, Gly-55, Asp-76, and Leu-120.

The protein belongs to the methyltransferase superfamily. UbiG/COQ3 family.

The enzyme catalyses a 3-demethylubiquinol + S-adenosyl-L-methionine = a ubiquinol + S-adenosyl-L-homocysteine + H(+). The catalysed reaction is a 3-(all-trans-polyprenyl)benzene-1,2-diol + S-adenosyl-L-methionine = a 2-methoxy-6-(all-trans-polyprenyl)phenol + S-adenosyl-L-homocysteine + H(+). The protein operates within cofactor biosynthesis; ubiquinone biosynthesis. Functionally, O-methyltransferase that catalyzes the 2 O-methylation steps in the ubiquinone biosynthetic pathway. This is Ubiquinone biosynthesis O-methyltransferase from Pseudomonas savastanoi pv. phaseolicola (strain 1448A / Race 6) (Pseudomonas syringae pv. phaseolicola (strain 1448A / Race 6)).